A 235-amino-acid chain; its full sequence is RAD9, HUS1, RAD1-interacting nuclear orphan protein 1 (235 aa).

Position 50 is a phosphoserine (S50). The RAD1-binding motif signature appears at 54-60 (SWVLPQF). The tract at residues 66–106 (SRFPTHRKHHRDQARHPTRRSTCKFPRLTFESPESSSSETL) is disordered. Basic residues predominate over residues 69–87 (PTHRKHHRDQARHPTRRST). Positions 96-106 (ESPESSSSETL) are enriched in low complexity. Positions 123–130 (RRPLVPLF) match the D-box motif. The segment at 156-198 (QTPGSSVREDPISPDQKENSLPSCILGPRTPRTPEPGPVLVKD) is disordered. Over residues 162 to 173 (VREDPISPDQKE) the composition is skewed to basic and acidic residues. The short motif at 171-175 (QKENS) is the KEN box element.

As to quaternary structure, interacts (when phosphorylated by PLK1) with POLQ; promoting POLQ recruitment to DNA damage sites. Interacts with RAD1; interaction is direct and promotes association with the 9-1-1 (RAD9-RAD1-HUS1) complex. Interacts with RAD18. Interacts with TOPBP1. Interacts with UBE2N. Post-translationally, phosphorylated at Ser-50 by PLK1, promoting interaction with polymerase theta (POLQ). Ubiquitinated and degraded by the APC/C complex upon mitotic exit.

The protein localises to the nucleus. It is found in the chromosome. In terms of biological role, involved in microhomology-mediated end-joining (MMEJ) DNA repair by promoting recruitment of polymerase theta (POLQ) to DNA damage sites during mitosis. MMEJ is an alternative non-homologous end-joining (NHEJ) machinery that takes place during mitosis to repair double-strand breaks in DNA that originate in S-phase. Accumulates in M-phase; following phosphorylation by PLK1, interacts with POLQ, enabling its recruitment to double-strand breaks for subsequent repair. Also involved in the DNA damage response (DDR) signaling in response to genotoxic stresses such as ionizing radiation (IR) during the S phase. Recruited to sites of DNA damage through interaction with the 9-1-1 cell-cycle checkpoint response complex and TOPBP1 in a ATR-dependent manner. Required for the progression of the G1 to S phase transition. Plays a role in the stimulation of CHEK1 phosphorylation. The sequence is that of RAD9, HUS1, RAD1-interacting nuclear orphan protein 1 (Rhno1) from Rattus norvegicus (Rat).